The sequence spans 416 residues: MSNFPSLRRDDRPDDPFADPLDAVLAELAINIQLPPGLHAKAVERYEAVRRYIERPGSPLEGRVACFYPQGSMAIDATTSTRGTDDEYDLDIVAEIEGPDLGPEALLDDLEAALESYPVSKVVRQTRCITLYYADGMHLDITPSRRRAPKEKEGEIPHAKKGTRSDPARYVPMNSYAFGKWYCARTPTEERFALALNRQLYEQAGIAFAAADVEDVPPQTPLIIKSVTTVALQLIKRHRNIAYATETGRIPPSVMLSCHAGHAARPGMRLAEMLIRQARWTARAIDDAAKRGQLLVVPNPEFPVERFTDRWPESQLQQTTYSRHLHTLANGLEAARTGDVQLEDLQEWLRGQFGDRVVTRSVKAFNQRLGRQVQSRQHGYTRSGGLFVPAAPAIIGAATSLAPVAARAHTNMGERR.

Position 72 (S72) interacts with GTP. Residues D89, D91, and D140 contribute to the active site. D91 provides a ligand contact to GTP. D91 is a Mg(2+) binding site. The disordered stretch occupies residues R145–P167. Residues K150 to P167 are compositionally biased toward basic and acidic residues. The GTP site is built by K236, S253, E305, R306, and D309.

The protein belongs to the CD-NTase family. G10 subfamily. Mg(2+) is required as a cofactor.

The catalysed reaction is UTP + GTP = 3',3'-cGMP-UMP + 2 diphosphate. It carries out the reaction GTP + ATP = 3',3'-cGAMP + 2 diphosphate. It catalyses the reaction 2 ATP = 3',3'-c-di-AMP + 2 diphosphate. Cyclic nucleotide synthase (second messenger synthase) of a CBASS antivirus system. CBASS (cyclic oligonucleotide-based antiphage signaling system) provides immunity against bacteriophage. The CD-NTase protein synthesizes cyclic nucleotides in response to infection; these serve as specific second messenger signals. The signals activate a diverse range of effectors, leading to bacterial cell death and thus abortive phage infection. A type II-short CBASS system. Functionally, cyclic dinucleotide synthase that catalyzes the synthesis of predominantly 3'3'-cGMP-UMP, followed by 3'3'-cGAMP and c-di-AMP in a reaction mixture of ATP, CTP, GTP and UTP. The cyclic nucleotide products are second messengers that activate the CBASS Cap5 effector nuclease, leading to DNA degradation and probably cell death. Cyclic nucleotides do not activate the effector equally; reactions with ATP/GTP, ATP/UTP and ATP alone activate Cap5, whereas reaction with GTP/UTP (the major in vitro product) do not. In Bradyrhizobium diazoefficiens (strain JCM 10833 / BCRC 13528 / IAM 13628 / NBRC 14792 / USDA 110), this protein is Cyclic dinucleotide synthase CdnG.